The chain runs to 91 residues: Probable Fe(2+)-trafficking protein (91 aa).

The protein belongs to the Fe(2+)-trafficking protein family.

Functionally, could be a mediator in iron transactions between iron acquisition and iron-requiring processes, such as synthesis and/or repair of Fe-S clusters in biosynthetic enzymes. The protein is Probable Fe(2+)-trafficking protein of Shewanella amazonensis (strain ATCC BAA-1098 / SB2B).